The chain runs to 199 residues: MIALLTGKLAHKSPDFIILDVNGVGYRVQIPFSTYYALPEGGSSVSLNIFTHVKEDAINLYGFRTMEEKEMFQLLISVSGIGPKLGNGILSNIEAQNLSDALIRGDLARLATIPGIGKKTAERLVLELREKVKKLGHGPLQQDVAPADAHNDMRDDVVSALVNLGYKEAVVQKTVDEIGVAADATVESLLKQALKKLMK.

The tract at residues 1-64 (MIALLTGKLA…EDAINLYGFR (64 aa)) is domain I. A domain II region spans residues 65-143 (TMEEKEMFQL…KLGHGPLQQD (79 aa)). Residues 144 to 148 (VAPAD) form a flexible linker region. The interval 149 to 199 (AHNDMRDDVVSALVNLGYKEAVVQKTVDEIGVAADATVESLLKQALKKLMK) is domain III.

It belongs to the RuvA family. As to quaternary structure, homotetramer. Forms an RuvA(8)-RuvB(12)-Holliday junction (HJ) complex. HJ DNA is sandwiched between 2 RuvA tetramers; dsDNA enters through RuvA and exits via RuvB. An RuvB hexamer assembles on each DNA strand where it exits the tetramer. Each RuvB hexamer is contacted by two RuvA subunits (via domain III) on 2 adjacent RuvB subunits; this complex drives branch migration. In the full resolvosome a probable DNA-RuvA(4)-RuvB(12)-RuvC(2) complex forms which resolves the HJ.

It is found in the cytoplasm. Functionally, the RuvA-RuvB-RuvC complex processes Holliday junction (HJ) DNA during genetic recombination and DNA repair, while the RuvA-RuvB complex plays an important role in the rescue of blocked DNA replication forks via replication fork reversal (RFR). RuvA specifically binds to HJ cruciform DNA, conferring on it an open structure. The RuvB hexamer acts as an ATP-dependent pump, pulling dsDNA into and through the RuvAB complex. HJ branch migration allows RuvC to scan DNA until it finds its consensus sequence, where it cleaves and resolves the cruciform DNA. This chain is Holliday junction branch migration complex subunit RuvA, found in Geotalea daltonii (strain DSM 22248 / JCM 15807 / FRC-32) (Geobacter daltonii).